Consider the following 532-residue polypeptide: Protoporphyrinogen oxidase (532 aa).

FAD is bound by residues 9 to 14 (GSGISG), I289, and 511 to 513 (VGI).

It belongs to the protoporphyrinogen/coproporphyrinogen oxidase family. Protoporphyrinogen oxidase subfamily. The cofactor is FAD.

The protein resides in the mitochondrion. It catalyses the reaction protoporphyrinogen IX + 3 O2 = protoporphyrin IX + 3 H2O2. It participates in porphyrin-containing compound metabolism; protoporphyrin-IX biosynthesis; protoporphyrin-IX from protoporphyrinogen-IX: step 1/1. Catalyzes the 6-electron oxidation of protoporphyrinogen-IX to form protoporphyrin-IX. The sequence is that of Protoporphyrinogen oxidase (ppox) from Dictyostelium discoideum (Social amoeba).